The primary structure comprises 89 residues: Helix-loop-helix protein 15 (89 aa).

Positions 1 to 32 are disordered; it reads MLMEDGGLDTTSEEYRKLSKAERRKRRRATPK. Residues 22–32 show a composition bias toward basic residues; that stretch reads ERRKRRRATPK. Residues 32-45 form a basic motif region; sequence KYRNLHATRERIRV. Residues 32-84 enclose the bHLH domain; the sequence is KYRNLHATRERIRVESFNMAFSQLRALLPTLPVEKKLSKIEILRFSIAYISFL. The segment at 46-84 is helix-loop-helix motif; it reads ESFNMAFSQLRALLPTLPVEKKLSKIEILRFSIAYISFL.

In terms of tissue distribution, expressed in sensory head neurons of the lateral ganglion.

It localises to the nucleus. Its function is as follows. Transcription factor which binds the E box motif 5'-CA[TC][AG]TG-3'. Involved in modulating physiological aging, probably by regulating expression of branched-chain amino acid transferase-1, bcat-1. This Caenorhabditis elegans protein is Helix-loop-helix protein 15.